Here is a 431-residue protein sequence, read N- to C-terminus: Trigger factor (431 aa).

The 86-residue stretch at 165-250 (GDTVVIDFDG…IHELKRKELP (86 aa)) folds into the PPIase FKBP-type domain.

Belongs to the FKBP-type PPIase family. Tig subfamily.

It localises to the cytoplasm. It catalyses the reaction [protein]-peptidylproline (omega=180) = [protein]-peptidylproline (omega=0). Its function is as follows. Involved in protein export. Acts as a chaperone by maintaining the newly synthesized protein in an open conformation. Functions as a peptidyl-prolyl cis-trans isomerase. In Leuconostoc citreum (strain KM20), this protein is Trigger factor.